Here is a 340-residue protein sequence, read N- to C-terminus: Phosphoribosylformylglycinamidine cyclo-ligase (340 aa).

This sequence belongs to the AIR synthase family.

The protein resides in the cytoplasm. The enzyme catalyses 2-formamido-N(1)-(5-O-phospho-beta-D-ribosyl)acetamidine + ATP = 5-amino-1-(5-phospho-beta-D-ribosyl)imidazole + ADP + phosphate + H(+). Its pathway is purine metabolism; IMP biosynthesis via de novo pathway; 5-amino-1-(5-phospho-D-ribosyl)imidazole from N(2)-formyl-N(1)-(5-phospho-D-ribosyl)glycinamide: step 2/2. The chain is Phosphoribosylformylglycinamidine cyclo-ligase from Streptococcus pyogenes serotype M18 (strain MGAS8232).